Reading from the N-terminus, the 526-residue chain is 3-hydroxy-3-methylglutaryl-coenzyme A reductase 2 (526 aa).

Residues Glu193, Lys325, and Asp401 each act as charge relay system in the active site. The Proton donor role is filled by His499. A disordered region spans residues Asn503–Asp526. Polar residues predominate over residues Asp514–Asp526.

This sequence belongs to the HMG-CoA reductase family.

It catalyses the reaction (R)-mevalonate + 2 NADP(+) + CoA = (3S)-3-hydroxy-3-methylglutaryl-CoA + 2 NADPH + 2 H(+). It participates in metabolic intermediate biosynthesis; (R)-mevalonate biosynthesis; (R)-mevalonate from acetyl-CoA: step 3/3. Functionally, this transmembrane glycoprotein is involved in the control of cholesterol biosynthesis. It is the rate-limiting enzyme of the sterol biosynthesis. The polypeptide is 3-hydroxy-3-methylglutaryl-coenzyme A reductase 2 (hmgB) (Dictyostelium discoideum (Social amoeba)).